Consider the following 332-residue polypeptide: Divalent cation transporter CmaX (332 aa).

At 1–277 (MQAYESGDER…MNRTMYLLGI (277 aa)) the chain is on the cytoplasmic side. A helical transmembrane segment spans residues 278–286 (ITGFFLPMS). Over 287–307 (FVTGLLGINVGGIPGADAPHG) the chain is Periplasmic. The helical transmembrane segment at 308 to 323 (FWLACLLIGGVATFQW) threads the bilayer. The Cytoplasmic segment spans residues 324 to 332 (WVFRRLRWL).

It belongs to the CorA metal ion transporter (MIT) (TC 1.A.35) family. As to quaternary structure, homopentamer.

It localises to the cell inner membrane. The enzyme catalyses Zn(2+)(in) = Zn(2+)(out). The catalysed reaction is Cd(2+)(in) = Cd(2+)(out). It catalyses the reaction Ni(2+)(in) = Ni(2+)(out). It carries out the reaction Co(2+)(in) = Co(2+)(out). Functionally, transports divalent cations including Zn(2+), Cd(2+), Ni(2+) and Co(2+). The proton gradient has a small influence on transport suggesting that the transport is probably not proton-dependent. The sequence is that of Divalent cation transporter CmaX from Pseudomonas aeruginosa (strain ATCC 15692 / DSM 22644 / CIP 104116 / JCM 14847 / LMG 12228 / 1C / PRS 101 / PAO1).